A 423-amino-acid polypeptide reads, in one-letter code: UPF0229 protein PSPA7_0730 (423 aa).

Positions 84–107 are disordered; that stretch reads AGEHIARPSGGGGGRGGGKASNSG. Gly residues predominate over residues 92–102; that stretch reads SGGGGGRGGGK.

This sequence belongs to the UPF0229 family.

The sequence is that of UPF0229 protein PSPA7_0730 from Pseudomonas paraeruginosa (strain DSM 24068 / PA7) (Pseudomonas aeruginosa (strain PA7)).